Reading from the N-terminus, the 384-residue chain is L-cysteine:1D-myo-inositol 2-amino-2-deoxy-alpha-D-glucopyranoside ligase (384 aa).

C16 is a Zn(2+) binding site. L-cysteinyl-5'-AMP contacts are provided by residues 16-19 (CGIT), T31, and 54-56 (NVT). The 'HIGH' region signature appears at 18–28 (ITPYDATHLGH). The 'ERGGDP' region signature appears at 159 to 164 (ERGGDP). W199 contacts L-cysteinyl-5'-AMP. Residue C203 participates in Zn(2+) binding. 221 to 223 (GSD) is an L-cysteinyl-5'-AMP binding site. Residue H228 coordinates Zn(2+). I255 serves as a coordination point for L-cysteinyl-5'-AMP. The short motif at 261-265 (KMSKS) is the 'KMSKS' region element.

It belongs to the class-I aminoacyl-tRNA synthetase family. MshC subfamily. Monomer. It depends on Zn(2+) as a cofactor.

It catalyses the reaction 1D-myo-inositol 2-amino-2-deoxy-alpha-D-glucopyranoside + L-cysteine + ATP = 1D-myo-inositol 2-(L-cysteinylamino)-2-deoxy-alpha-D-glucopyranoside + AMP + diphosphate + H(+). Catalyzes the ATP-dependent condensation of GlcN-Ins and L-cysteine to form L-Cys-GlcN-Ins. In Mycobacterium avium (strain 104), this protein is L-cysteine:1D-myo-inositol 2-amino-2-deoxy-alpha-D-glucopyranoside ligase.